The chain runs to 524 residues: Glutamyl-tRNA(Gln) amidotransferase subunit A (524 aa).

Catalysis depends on charge relay system residues lysine 109 and serine 184. Serine 208 acts as the Acyl-ester intermediate in catalysis.

The protein belongs to the amidase family. GatA subfamily. As to quaternary structure, heterotrimer of A, B and C subunits.

It carries out the reaction L-glutamyl-tRNA(Gln) + L-glutamine + ATP + H2O = L-glutaminyl-tRNA(Gln) + L-glutamate + ADP + phosphate + H(+). Allows the formation of correctly charged Gln-tRNA(Gln) through the transamidation of misacylated Glu-tRNA(Gln) in organisms which lack glutaminyl-tRNA synthetase. The reaction takes place in the presence of glutamine and ATP through an activated gamma-phospho-Glu-tRNA(Gln). The sequence is that of Glutamyl-tRNA(Gln) amidotransferase subunit A from Tropheryma whipplei (strain TW08/27) (Whipple's bacillus).